The chain runs to 290 residues: Phosphate import ATP-binding protein PstB (290 aa).

The ABC transporter domain occupies 25–285; sequence LEARNLDFYY…PKTRRARDYL (261 aa). Residue 57 to 64 participates in ATP binding; that stretch reads GPSGCGKS.

Belongs to the ABC transporter superfamily. Phosphate importer (TC 3.A.1.7) family. As to quaternary structure, the complex is composed of two ATP-binding proteins (PstB), two transmembrane proteins (PstC and PstA) and a solute-binding protein (PstS).

The protein localises to the cell inner membrane. The enzyme catalyses phosphate(out) + ATP + H2O = ADP + 2 phosphate(in) + H(+). Part of the ABC transporter complex PstSACB involved in phosphate import. Responsible for energy coupling to the transport system. The polypeptide is Phosphate import ATP-binding protein PstB (Zymomonas mobilis subsp. mobilis (strain ATCC 31821 / ZM4 / CP4)).